A 216-amino-acid chain; its full sequence is DDB1- and CUL4-associated factor 16 (216 aa).

The disordered stretch occupies residues 1-42 (MGPRNPSPDHLSESESEEEENISYLNESSGEEWDSSEEEDSM). Residues 29–41 (SGEEWDSSEEEDS) are compositionally biased toward acidic residues. Lys-61 is modified (N6-acetyllysine).

In terms of assembly, interacts with DDB1 and CUL4A.

The protein resides in the nucleus. It participates in protein modification; protein ubiquitination. Functionally, functions as a substrate recognition component for CUL4-DDB1 E3 ubiquitin-protein ligase complex, which mediates ubiquitination and proteasome-dependent degradation of nuclear proteins. This Homo sapiens (Human) protein is DDB1- and CUL4-associated factor 16.